Here is a 759-residue protein sequence, read N- to C-terminus: Catalase-peroxidase (759 aa).

The interval 1 to 24 (MTQDKCPFKEQSSQPNFAGGGTSN) is disordered. A cross-link (tryptophyl-tyrosyl-methioninium (Trp-Tyr) (with M-268)) is located at residues 96 to 242 (WHSAGTYRVF…LAAAHMGLIY (147 aa)). His97 acts as the Proton acceptor in catalysis. Positions 242-268 (YVNPEGPDGNPDPVAAAHDIRDTFGRM) form a cross-link, tryptophyl-tyrosyl-methioninium (Tyr-Met) (with W-96). His283 serves as a coordination point for heme b.

It belongs to the peroxidase family. Peroxidase/catalase subfamily. In terms of assembly, homodimer or homotetramer. Heme b is required as a cofactor. Post-translationally, formation of the three residue Trp-Tyr-Met cross-link is important for the catalase, but not the peroxidase activity of the enzyme.

The protein resides in the cytoplasm. The enzyme catalyses H2O2 + AH2 = A + 2 H2O. It catalyses the reaction 2 H2O2 = O2 + 2 H2O. Functionally, bifunctional enzyme with both catalase and broad-spectrum peroxidase activity. The polypeptide is Catalase-peroxidase (Aspergillus fumigatus (strain CBS 144.89 / FGSC A1163 / CEA10) (Neosartorya fumigata)).